The primary structure comprises 308 residues: tRNA pseudouridine synthase B (308 aa).

Asp-51 acts as the Nucleophile in catalysis.

This sequence belongs to the pseudouridine synthase TruB family. Type 1 subfamily.

The enzyme catalyses uridine(55) in tRNA = pseudouridine(55) in tRNA. Responsible for synthesis of pseudouridine from uracil-55 in the psi GC loop of transfer RNAs. The polypeptide is tRNA pseudouridine synthase B (Aromatoleum aromaticum (strain DSM 19018 / LMG 30748 / EbN1) (Azoarcus sp. (strain EbN1))).